Here is a 229-residue protein sequence, read N- to C-terminus: Uracil-DNA glycosylase (229 aa).

Residue Asp64 is the Proton acceptor of the active site.

Belongs to the uracil-DNA glycosylase (UDG) superfamily. UNG family.

The protein resides in the cytoplasm. It catalyses the reaction Hydrolyzes single-stranded DNA or mismatched double-stranded DNA and polynucleotides, releasing free uracil.. Excises uracil residues from the DNA which can arise as a result of misincorporation of dUMP residues by DNA polymerase or due to deamination of cytosine. In Escherichia coli O81 (strain ED1a), this protein is Uracil-DNA glycosylase.